Reading from the N-terminus, the 160-residue chain is Transcription elongation factor GreA (160 aa).

Residues 10-37 (TLDGKAKLENELQELKTVKRKEVVERIK) are a coiled coil.

Belongs to the GreA/GreB family.

Functionally, necessary for efficient RNA polymerase transcription elongation past template-encoded arresting sites. The arresting sites in DNA have the property of trapping a certain fraction of elongating RNA polymerases that pass through, resulting in locked ternary complexes. Cleavage of the nascent transcript by cleavage factors such as GreA or GreB allows the resumption of elongation from the new 3'terminus. GreA releases sequences of 2 to 3 nucleotides. The protein is Transcription elongation factor GreA of Listeria innocua serovar 6a (strain ATCC BAA-680 / CLIP 11262).